The sequence spans 365 residues: Outer capsid protein sigma-3 (365 aa).

The CCHC-type zinc finger occupies cysteine 51–cysteine 73.

This sequence belongs to the orthoreovirus sigma-3 protein family. Heterohexamer of three sigma-3 and three Mu-1 proteins. The RNA-binding form is probably a homodimer. Post-translationally, cleaved during virus the endosomal proteolytic disassembly of the outer capsid.

Its subcellular location is the virion. It is found in the host cytoplasm. The protein resides in the host nucleus. Stimulates translation by blocking the activation of the dsRNA-dependent protein kinase EIF2AK2/PKR, thereby inhibiting the host interferon response. Sigma3 prevents the activation of EIF2AK2 by competing with the kinase for dsRNA-binding. In terms of biological role, the viral outer shell polypeptides, of which sigma-3 is one, impose structural constraints that prevent elongation of nascent transcripts by the RNA-dependent RNA polymerase lambda-3. This chain is Outer capsid protein sigma-3 (S4), found in Mammalia (T2J).